The following is a 139-amino-acid chain: MSNSASGMAVCDECKLKFLELKAKRSFRFIVFKINEKVQQVVVDRLGQPGESYDDFTACLPADECRYAVFDFDFVTDENCQKSKIFFISWAPDTSRVRSKMLYASSKDRFKRELDGIQVELQATDPSEMSMDIVKSRAL.

Residues 5-139 (ASGMAVCDEC…SMDIVKSRAL (135 aa)) form the ADF-H domain.

This sequence belongs to the actin-binding proteins ADF family.

Its function is as follows. Actin-depolymerizing protein. Severs actin filaments (F-actin) and binds to actin monomers. This chain is Actin-depolymerizing factor 1 (ADF1), found in Oryza sativa subsp. japonica (Rice).